Consider the following 262-residue polypeptide: Acyl-[acyl-carrier-protein]--UDP-N-acetylglucosamine O-acyltransferase (262 aa).

Belongs to the transferase hexapeptide repeat family. LpxA subfamily. Homotrimer.

It localises to the cytoplasm. The catalysed reaction is a (3R)-hydroxyacyl-[ACP] + UDP-N-acetyl-alpha-D-glucosamine = a UDP-3-O-[(3R)-3-hydroxyacyl]-N-acetyl-alpha-D-glucosamine + holo-[ACP]. The protein operates within glycolipid biosynthesis; lipid IV(A) biosynthesis; lipid IV(A) from (3R)-3-hydroxytetradecanoyl-[acyl-carrier-protein] and UDP-N-acetyl-alpha-D-glucosamine: step 1/6. In terms of biological role, involved in the biosynthesis of lipid A, a phosphorylated glycolipid that anchors the lipopolysaccharide to the outer membrane of the cell. The polypeptide is Acyl-[acyl-carrier-protein]--UDP-N-acetylglucosamine O-acyltransferase (Pasteurella multocida (strain Pm70)).